We begin with the raw amino-acid sequence, 495 residues long: UDP-N-acetylmuramoyl-L-alanyl-D-glutamate--2,6-diaminopimelate ligase (495 aa).

UDP-N-acetyl-alpha-D-muramoyl-L-alanyl-D-glutamate is bound at residue S29. Residue G111–S117 coordinates ATP. UDP-N-acetyl-alpha-D-muramoyl-L-alanyl-D-glutamate contacts are provided by residues T153–T154, S180, Q186, and R188. K220 is modified (N6-carboxylysine). Meso-2,6-diaminopimelate contacts are provided by residues R384, D408 to R411, G459, and E463. The short motif at D408 to R411 is the Meso-diaminopimelate recognition motif element.

It belongs to the MurCDEF family. MurE subfamily. It depends on Mg(2+) as a cofactor. Carboxylation is probably crucial for Mg(2+) binding and, consequently, for the gamma-phosphate positioning of ATP.

Its subcellular location is the cytoplasm. It catalyses the reaction UDP-N-acetyl-alpha-D-muramoyl-L-alanyl-D-glutamate + meso-2,6-diaminopimelate + ATP = UDP-N-acetyl-alpha-D-muramoyl-L-alanyl-gamma-D-glutamyl-meso-2,6-diaminopimelate + ADP + phosphate + H(+). Its pathway is cell wall biogenesis; peptidoglycan biosynthesis. Catalyzes the addition of meso-diaminopimelic acid to the nucleotide precursor UDP-N-acetylmuramoyl-L-alanyl-D-glutamate (UMAG) in the biosynthesis of bacterial cell-wall peptidoglycan. The sequence is that of UDP-N-acetylmuramoyl-L-alanyl-D-glutamate--2,6-diaminopimelate ligase from Xanthomonas oryzae pv. oryzae (strain MAFF 311018).